The chain runs to 156 residues: Cyanate hydratase (156 aa).

Catalysis depends on residues R96, E99, and S122.

Belongs to the cyanase family.

It carries out the reaction cyanate + hydrogencarbonate + 3 H(+) = NH4(+) + 2 CO2. Catalyzes the reaction of cyanate with bicarbonate to produce ammonia and carbon dioxide. The sequence is that of Cyanate hydratase from Pseudomonas fluorescens (strain ATCC BAA-477 / NRRL B-23932 / Pf-5).